Consider the following 380-residue polypeptide: Cytosolic acyl coenzyme A thioester hydrolase (380 aa).

In terms of domain architecture, HotDog ACOT-type 1 spans 50-168 (PCGACITGRI…TLWYVPLSLK (119 aa)). The active site involves N66. N6-acetyllysine is present on residues K168 and K198. In terms of domain architecture, HotDog ACOT-type 2 spans 224–338 (SYSQSSLIHL…FFTYVSLSQE (115 aa)). The active site involves D255. N6-acetyllysine is present on K283. The disordered stretch occupies residues 350-380 (ETEDEKKRFEEGKGRYLQMKAKRQGHAEPQP). Over residues 353-363 (DEKKRFEEGKG) the composition is skewed to basic and acidic residues.

In terms of assembly, homohexamer. In terms of tissue distribution, isoform 4 is expressed exclusively in brain.

Its subcellular location is the cytoplasm. It is found in the cytosol. The protein localises to the mitochondrion. It catalyses the reaction hexadecanoyl-CoA + H2O = hexadecanoate + CoA + H(+). The enzyme catalyses octanoyl-CoA + H2O = octanoate + CoA + H(+). The catalysed reaction is dodecanoyl-CoA + H2O = dodecanoate + CoA + H(+). It carries out the reaction (9Z)-octadecenoyl-CoA + H2O = (9Z)-octadecenoate + CoA + H(+). It catalyses the reaction tetradecanoyl-CoA + H2O = tetradecanoate + CoA + H(+). The enzyme catalyses decanoyl-CoA + H2O = decanoate + CoA + H(+). The catalysed reaction is octadecanoyl-CoA + H2O = octadecanoate + CoA + H(+). It participates in lipid metabolism; fatty acid metabolism. Catalyzes the hydrolysis of acyl-CoAs into free fatty acids and coenzyme A (CoASH), regulating their respective intracellular levels. Preferentially hydrolyzes palmitoyl-CoA, but has a broad specificity acting on other fatty acyl-CoAs with chain-lengths of C8-C18. May play an important physiological function in brain. The sequence is that of Cytosolic acyl coenzyme A thioester hydrolase (ACOT7) from Homo sapiens (Human).